We begin with the raw amino-acid sequence, 541 residues long: Forkhead box protein O (541 aa).

The span at 118-150 (NEQCGQLGGASSNGSTAMLHTPDGSNSHQTSFP) shows a compositional bias: polar residues. Disordered stretches follow at residues 118–168 (NEQC…GKKT) and 252–291 (WVIN…GAKK). The fork-head DNA-binding region spans 175–268 (WGNMSYAELI…KPGRNPRRTR (94 aa)). T273 carries the post-translational modification Phosphothreonine. At S319 the chain carries Phosphoserine; by CaMK2.

As to quaternary structure, interacts with rle-1. Interacts with unc-43 and tax-6. Interacts with jnk-1. Interacts with ftt-2. Interacts with prmt-1. Interacts with hcf-1. Post-translationally, phosphorylated by akt-1 and/or akt-2. Phosphorylated by sgk-1. Phosphorylated by unc-43. Phosphorylated by jnk-1. Dephosphorylated by tax-6 in vitro. Ubiquitinated. Ubiquitination by rle-1 leads to proteasome-mediated degradation. In terms of processing, methylation by prmt-1 prevents phosphorylation and promotes translocation to the nucleus to allow for daf-16-dependent transcription. Isoform b and isoform c are expressed in ectoderm, muscles, intestine and neurons. Isoform b is also expressed in the pharynx. The intestine appears to be the primary site of longevity function.

The protein localises to the nucleus. It is found in the cytoplasm. Functionally, forkhead-type transcription factor. Binds to the promoters of genes that contain the daf-16/FOXO binding element (DBE), TTGTTTAC, in their regulatory region. Functions in the Insulin/IGF-1-like signaling (IIS) mediated pathway which affects lipogenesis, lifespan, starvation survival, heat shock and oxidative stress responses, sleep, associative memory, and dauer formation. Longevity signaling predominantly arises from expression in the intestine. Acts in the intestine to mediate the role of slo-1 in age-associated decline in motor activity and longevity. Transcriptional activity of daf-16/FOXO is negatively regulated by interaction with host cell factor homolog hcf-1; and by cytoplasmic sequestration by association with ftt-2. Inhibition is required for the carbon dioxide (CO2) avoidance response. Upon loss of inhibition, daf-16 translocates to the nucleus to regulate genes that result in delayed reproduction and growth while increasing stress resistance starvation tolerance and longevity. Association with arginine methyltransferase prmt-1 prevents phosphorylation and allows for translocation to the nucleus and the subsequent transcription of longevity-related genes. Modulation of its activity by cGMP levels in sensory neurons regulates lifespan. Has a protective role against muscle dystrophy. Involved in mediating protection against aberrant protein aggregation proteotoxicity. Influences transcription of genes that code for proteins involved in immunity as part of a general stress response. Targets genes that inhibit and stimulate tumor growth. Targets kinases, phosphatases and transcription factors that are primarily involved in signaling and gene regulation. Thought to regulate ins-7 in FOXO-to-FOXO signaling, which coordinates daf-16 expression. Activity is positively regulated by shc-1-mediated inhibition of daf-2 and activation of JNK pathway. Through the regulation of its activity by shc-1-mediated inhibition of daf-2 and activation of JNK pathway, plays a role in maintaining the integrity of the gonad. Functions by indirect interaction with jnk-1 of the mitogen-activated protein kinase (MAPK) pathway. Involved in increased proteasome activity by activating expression of rpn-6.1 in response to proteotoxic stress, leading to enhanced assembly of the 26S proteasome, followed by higher proteasome activity. Also regulates proteasome activity in the intestine by preventing expression of deubiquitinase ubh-4. Represses transcription of natc-1. Involved in regulation of srh-234 expression. Binds to the promoter of the AMPK-gamma regulatory subunit, aakg-4, and activates its transcription. Also activates transcription of AMPK-gamma regulatory subunit, aakg-1. Maintains endoplasmic reticulum (ER) function by inducing protein degradation and elimination to remove misfolded secretory proteins from the ER independently of the ire-1/xbp-1 unfolded protein response pathway. Regulates epidermal innate immunity to nematophagous fungal infection and physical wounding which trigger bli-3 induced ROS release, leading to daf-16 activation independently of daf-2 signaling. May negatively regulate resistance to stress caused by oxidized cholesterol adducts by preventing the activation of daf-9 and nuclear hormone receptor daf-12, two members of the steroid signaling pathway. Promotes apoptosis during embryonic development. Probably through the regulation of the autophagy genes atg-18 and atg-16.2, plays a role in regulating stem cell number in the germline during larval development. Plays a role in learning and memory; including associative memory, and aversive gustatory associated learning known as salt avoidance learning. Plays a role in regulating gene transcription in response to white light exposure. Binds to the promoter of dex-1 to positively regulate its expression in seam cells during the dauer phase. Plays a role in transgenerational lipid accumulation in response to a high-fat diet. In terms of biological role, functions in the Insulin/IGF-1-like signaling (IIS) mediated pathway. May play a role in lifespan modulation, but less significant than that played by isoforms d and f. Functions in the Insulin/IGF-1-like signaling (IIS) mediated pathway. Transcript level in the early adult may play a role in lifespan modulation, but effect is more significant than that played by isoform a. In Caenorhabditis elegans, this protein is Forkhead box protein O.